We begin with the raw amino-acid sequence, 340 residues long: Ketol-acid reductoisomerase (NADP(+)) (340 aa).

The KARI N-terminal Rossmann domain occupies 3 to 182 (VQMEYEKDVK…GAARVGLLET (180 aa)). Residues 26 to 29 (YGSQ), Arg-49, Ser-53, and 83 to 86 (DEIQ) each bind NADP(+). His-108 is a catalytic residue. Gly-134 serves as a coordination point for NADP(+). Positions 183–328 (TYKEETEEDL…AELRKAMPFV (146 aa)) constitute a KARI C-terminal knotted domain. 4 residues coordinate Mg(2+): Asp-191, Glu-195, Glu-227, and Glu-231. Residue Ser-252 coordinates substrate.

It belongs to the ketol-acid reductoisomerase family. It depends on Mg(2+) as a cofactor.

It carries out the reaction (2R)-2,3-dihydroxy-3-methylbutanoate + NADP(+) = (2S)-2-acetolactate + NADPH + H(+). The enzyme catalyses (2R,3R)-2,3-dihydroxy-3-methylpentanoate + NADP(+) = (S)-2-ethyl-2-hydroxy-3-oxobutanoate + NADPH + H(+). It participates in amino-acid biosynthesis; L-isoleucine biosynthesis; L-isoleucine from 2-oxobutanoate: step 2/4. Its pathway is amino-acid biosynthesis; L-valine biosynthesis; L-valine from pyruvate: step 2/4. Functionally, involved in the biosynthesis of branched-chain amino acids (BCAA). Catalyzes an alkyl-migration followed by a ketol-acid reduction of (S)-2-acetolactate (S2AL) to yield (R)-2,3-dihydroxy-isovalerate. In the isomerase reaction, S2AL is rearranged via a Mg-dependent methyl migration to produce 3-hydroxy-3-methyl-2-ketobutyrate (HMKB). In the reductase reaction, this 2-ketoacid undergoes a metal-dependent reduction by NADPH to yield (R)-2,3-dihydroxy-isovalerate. The chain is Ketol-acid reductoisomerase (NADP(+)) from Streptococcus pneumoniae (strain Hungary19A-6).